The chain runs to 94 residues: Integration host factor subunit beta (94 aa).

Belongs to the bacterial histone-like protein family. As to quaternary structure, heterodimer of an alpha and a beta chain.

In terms of biological role, this protein is one of the two subunits of integration host factor, a specific DNA-binding protein that functions in genetic recombination as well as in transcriptional and translational control. This Xanthobacter autotrophicus (strain ATCC BAA-1158 / Py2) protein is Integration host factor subunit beta.